Consider the following 408-residue polypeptide: Zinc finger and SCAN domain-containing protein 1 (408 aa).

Residues 1-34 (MLPRPKAPASPRRPQTPTPSEQDADPGPASPRDT) are disordered. Positions 38–120 (RLRFRQFQYH…SLVEDLTQMC (83 aa)) constitute an SCAN box domain. Disordered regions lie at residues 136–155 (WSFG…EPSQ), 177–203 (LETT…LLGS), and 215–273 (DEPE…GGTQ). A compositionally biased stretch (polar residues) spans 177 to 187 (LETTQLQQSLH). 2 C2H2-type zinc fingers span residues 292–314 (FQCA…QKTH) and 320–342 (FPCP…GKIH). The tract at residues 344–379 (LEPPRKKAPRSKGPRESVPPRDGAQGPVAPRSPKRP) is disordered. The segment at 380–402 (FQCSVCGKAFPWMVHLIDHQKLH) adopts a C2H2-type 3 zinc-finger fold.

Its subcellular location is the nucleus. In terms of biological role, may be involved in transcriptional regulation. This is Zinc finger and SCAN domain-containing protein 1 (ZSCAN1) from Homo sapiens (Human).